The following is a 331-amino-acid chain: Biotin synthase (331 aa).

The Radical SAM core domain occupies 52 to 281 (FFQNKVKLNM…TKEIRVSGGR (230 aa)). [4Fe-4S] cluster-binding residues include C70, C74, and C77. C114, C146, C206, and R276 together coordinate [2Fe-2S] cluster.

The protein belongs to the radical SAM superfamily. Biotin synthase family. As to quaternary structure, homodimer. [4Fe-4S] cluster is required as a cofactor. [2Fe-2S] cluster serves as cofactor.

The catalysed reaction is (4R,5S)-dethiobiotin + (sulfur carrier)-SH + 2 reduced [2Fe-2S]-[ferredoxin] + 2 S-adenosyl-L-methionine = (sulfur carrier)-H + biotin + 2 5'-deoxyadenosine + 2 L-methionine + 2 oxidized [2Fe-2S]-[ferredoxin]. It participates in cofactor biosynthesis; biotin biosynthesis; biotin from 7,8-diaminononanoate: step 2/2. Catalyzes the conversion of dethiobiotin (DTB) to biotin by the insertion of a sulfur atom into dethiobiotin via a radical-based mechanism. The protein is Biotin synthase of Bacillus pumilus (strain SAFR-032).